The primary structure comprises 148 residues: Transcription antitermination protein NusB (148 aa).

It belongs to the NusB family.

Functionally, involved in transcription antitermination. Required for transcription of ribosomal RNA (rRNA) genes. Binds specifically to the boxA antiterminator sequence of the ribosomal RNA (rrn) operons. In Nitrosococcus oceani (strain ATCC 19707 / BCRC 17464 / JCM 30415 / NCIMB 11848 / C-107), this protein is Transcription antitermination protein NusB.